Consider the following 150-residue polypeptide: Deoxyuridine 5'-triphosphate nucleotidohydrolase (150 aa).

Substrate contacts are provided by residues 69 to 71, N82, 86 to 88, and M96; these read RSG and LID.

It belongs to the dUTPase family. It depends on Mg(2+) as a cofactor.

The catalysed reaction is dUTP + H2O = dUMP + diphosphate + H(+). Its pathway is pyrimidine metabolism; dUMP biosynthesis; dUMP from dCTP (dUTP route): step 2/2. Its function is as follows. This enzyme is involved in nucleotide metabolism: it produces dUMP, the immediate precursor of thymidine nucleotides and it decreases the intracellular concentration of dUTP so that uracil cannot be incorporated into DNA. The chain is Deoxyuridine 5'-triphosphate nucleotidohydrolase from Acinetobacter baumannii (strain AB307-0294).